The chain runs to 108 residues: Nitrogenase-stabilizing/protective protein NifW (108 aa).

It belongs to the NifW family. Homotrimer; associates with NifD.

May protect the nitrogenase Fe-Mo protein from oxidative damage. The sequence is that of Nitrogenase-stabilizing/protective protein NifW from Zymomonas mobilis subsp. mobilis (strain ATCC 31821 / ZM4 / CP4).